We begin with the raw amino-acid sequence, 604 residues long: Elongation factor 4 (604 aa).

The 183-residue stretch at 7-189 folds into the tr-type G domain; it reads SRLRNFCIIA…AVVDRIPPPA (183 aa). GTP is bound by residues 19–24 and 136–139; these read DHGKST and NKID.

It belongs to the TRAFAC class translation factor GTPase superfamily. Classic translation factor GTPase family. LepA subfamily.

Its subcellular location is the cell inner membrane. The enzyme catalyses GTP + H2O = GDP + phosphate + H(+). Functionally, required for accurate and efficient protein synthesis under certain stress conditions. May act as a fidelity factor of the translation reaction, by catalyzing a one-codon backward translocation of tRNAs on improperly translocated ribosomes. Back-translocation proceeds from a post-translocation (POST) complex to a pre-translocation (PRE) complex, thus giving elongation factor G a second chance to translocate the tRNAs correctly. Binds to ribosomes in a GTP-dependent manner. This Prochlorococcus marinus (strain MIT 9313) protein is Elongation factor 4.